A 391-amino-acid polypeptide reads, in one-letter code: Aminoacetone oxidase (391 aa).

Residues alanine 14, glutamate 33, isoleucine 134, glutamate 362, asparagine 374, and isoleucine 375 each contribute to the FAD site.

The protein belongs to the BaiN/RdsA family. As to quaternary structure, monomer. FAD serves as cofactor.

Its function is as follows. Flavoprotein that probably catalyzes the condensation of two molecules of aminoacetone to yield 3,6-dimethyl-2,5-dihydropyrazine, which is subsequently oxidized to 2,5-dimethylpyrazine. It could be involved in a microbial defense mechanism related to aminoacetone catabolism through a pathway yielding dimethylpyrazine derivatives instead of methylglyoxal. It has also low aminoacetone oxidase activity, and can produce hydrogen peroxide from aminoacetone. In addition, it shows very low L-amino acid oxidase activity, and can produce hydrogen peroxide from peptone and from seven amino acids, L-aspartate, L-tryptophan, L-lysine, L-isoleucine, L-arginine, L-asparagine and L-glutamine. It cannot use L-malate, oxaloacetate or alpha-aminobutyrate. Plays a role in antioxidant defense. This is Aminoacetone oxidase from Streptococcus cristatus.